Here is a 303-residue protein sequence, read N- to C-terminus: tRNA dimethylallyltransferase (303 aa).

16–23 is an ATP binding site; that stretch reads GPTASGKS. 18–23 contributes to the substrate binding site; it reads TASGKS. An interaction with substrate tRNA region spans residues 41–44; that stretch reads DSMQ. The segment at 141 to 161 is disordered; the sequence is AEALHGELSARDPETAGRVRP. Positions 165–169 are interaction with substrate tRNA; the sequence is QRIVR.

The protein belongs to the IPP transferase family. As to quaternary structure, monomer. Requires Mg(2+) as cofactor.

The catalysed reaction is adenosine(37) in tRNA + dimethylallyl diphosphate = N(6)-dimethylallyladenosine(37) in tRNA + diphosphate. Catalyzes the transfer of a dimethylallyl group onto the adenine at position 37 in tRNAs that read codons beginning with uridine, leading to the formation of N6-(dimethylallyl)adenosine (i(6)A). The chain is tRNA dimethylallyltransferase from Rhizobium meliloti (strain 1021) (Ensifer meliloti).